A 348-amino-acid chain; its full sequence is MTAEKSKALAAALAQIEKQFGKGSIMRMGDGEATENIQVVSTGSLGLDIALGVGGLPRGRVVEIYGPESSGKTTLTLQVIAELQKIGGTAAFIDAEHALDVQYAAKLGVNVPELLISQPDTGEQALEITDALVRSGSIDMIVIDSVAALVPKAEIEGEMGDSLPGLQARLMSQALRKLTGTIKRTNCLVIFINQIRMKIGVMFGNPETTTGGNALKFYSSVRLDIRRIGSIKKNDEVIGNETRVKVVKNKVSPPFREAIFDILYGEGISRQGEIIDLGVQAKIVDKAGAWYSYNGEKIGQGKDNAREFLRENPEIAREIENRIRESLGVVAMPDGAGQDEAEAMDEEE.

Gly66–Thr73 is a binding site for ATP.

This sequence belongs to the RecA family.

The protein localises to the cytoplasm. In terms of biological role, can catalyze the hydrolysis of ATP in the presence of single-stranded DNA, the ATP-dependent uptake of single-stranded DNA by duplex DNA, and the ATP-dependent hybridization of homologous single-stranded DNAs. It interacts with LexA causing its activation and leading to its autocatalytic cleavage. The protein is Protein RecA of Burkholderia lata (strain ATCC 17760 / DSM 23089 / LMG 22485 / NCIMB 9086 / R18194 / 383).